A 366-amino-acid chain; its full sequence is Cellular tumor antigen p53 (366 aa).

Residues Met-1–Asp-41 are transcription activation (acidic). Residues Asp-80–Thr-267 mediate DNA binding. Cys-154, His-157, Cys-213, and Cys-217 together coordinate Zn(2+). Residues Arg-248–Arg-255 are interaction with DNA. Residues Arg-255 to Ser-264 show a composition bias toward basic and acidic residues. Residues Arg-255–Lys-305 are disordered. The Bipartite nuclear localization signal signature appears at Lys-275 to Lys-295. Positions Ala-280 to Met-292 are enriched in polar residues. The tract at residues Lys-305 to Lys-336 is oligomerization. The Nuclear export signal signature appears at Glu-319 to Gly-330. The tract at residues Ala-332–Asp-366 is disordered. The tract at residues Val-341 to Arg-362 is basic (repression of DNA-binding).

It belongs to the p53 family. In terms of assembly, binds DNA as a homotetramer. Requires Zn(2+) as cofactor.

The protein resides in the cytoplasm. Its subcellular location is the nucleus. Functionally, multifunctional transcription factor that induces cell cycle arrest, DNA repair or apoptosis upon binding to its target DNA sequence. Acts as a tumor suppressor in many tumor types; induces growth arrest or apoptosis depending on the physiological circumstances and cell type. Negatively regulates cell division by controlling expression of a set of genes required for this process. One of the activated genes is an inhibitor of cyclin-dependent kinases. Apoptosis induction seems to be mediated either by stimulation of BAX and FAS antigen expression, or by repression of Bcl-2 expression. In Platichthys flesus (European flounder), this protein is Cellular tumor antigen p53 (tp53).